Reading from the N-terminus, the 134-residue chain is Homeobox protein ceh-5 (134 aa).

The segment at residues 35–94 (PKRPRTVFTDEQLEKLEESFNTSGYLSGSTRAKLAESLGLSDNQVKVWFQNRRTKQKKID) is a DNA-binding region (homeobox).

Its subcellular location is the nucleus. The chain is Homeobox protein ceh-5 (ceh-5) from Caenorhabditis elegans.